The primary structure comprises 218 residues: Probable GTP-binding protein EngB (218 aa).

The EngB-type G domain maps to 23–200; that stretch reads EVPEIAFVGR…AQLLWQWAHP (178 aa). GTP is bound by residues 31-38, 58-62, 80-83, 150-153, and 179-181; these read GRSNAGKS, GRTQH, DLPG, TKAD, and FSA. Positions 38 and 60 each coordinate Mg(2+).

It belongs to the TRAFAC class TrmE-Era-EngA-EngB-Septin-like GTPase superfamily. EngB GTPase family. It depends on Mg(2+) as a cofactor.

Functionally, necessary for normal cell division and for the maintenance of normal septation. This is Probable GTP-binding protein EngB from Acidovorax ebreus (strain TPSY) (Diaphorobacter sp. (strain TPSY)).